A 447-amino-acid polypeptide reads, in one-letter code: N-succinylarginine dihydrolase (447 aa).

Residues A19–S28, N110, and H137–R138 each bind substrate. Residue E174 is part of the active site. A substrate-binding site is contributed by R212. H248 is an active-site residue. Substrate is bound by residues D250 and N359. The active-site Nucleophile is the C365.

Belongs to the succinylarginine dihydrolase family. Homodimer.

The enzyme catalyses N(2)-succinyl-L-arginine + 2 H2O + 2 H(+) = N(2)-succinyl-L-ornithine + 2 NH4(+) + CO2. It functions in the pathway amino-acid degradation; L-arginine degradation via AST pathway; L-glutamate and succinate from L-arginine: step 2/5. Its function is as follows. Catalyzes the hydrolysis of N(2)-succinylarginine into N(2)-succinylornithine, ammonia and CO(2). The polypeptide is N-succinylarginine dihydrolase (Escherichia coli O7:K1 (strain IAI39 / ExPEC)).